The primary structure comprises 205 residues: Anaerobic dimethyl sulfoxide reductase chain B (205 aa).

4Fe-4S ferredoxin-type domains are found at residues 4–32, 57–89, and 90–119; these read YGFY…LGTE, NIFA…KNAD, and GFVI…YDAQ. Residues Cys13, Cys16, Cys19, Cys23, Cys67, Cys70, Cys75, Cys79, Cys99, Cys102, Cys105, Cys109, Cys126, Cys129, Cys141, and Cys145 each contribute to the [4Fe-4S] cluster site.

In terms of assembly, heterotrimeric enzyme composed of a catalytic heterodimer (DmsAB) and a membrane anchor protein (DmsC). [4Fe-4S] cluster serves as cofactor.

Its function is as follows. Electron transfer subunit of the terminal reductase during anaerobic growth on various sulfoxide and N-oxide compounds. The polypeptide is Anaerobic dimethyl sulfoxide reductase chain B (dmsB) (Haemophilus influenzae (strain ATCC 51907 / DSM 11121 / KW20 / Rd)).